We begin with the raw amino-acid sequence, 220 residues long: Pro-Pro endopeptidase (220 aa).

A signal peptide spans 1–26; sequence MRPSKKLLIAIISIFLISSVPVSAHA. Residues 35–220 form the ATLF-like domain; that stretch reads KDTLSQIVVF…TYSFLQNLAK (186 aa). 2 interacts with substrate peptide regions span residues 101–103 and 117–119; these read KGW and GGS. His-142 is a binding site for Zn(2+). Glu-143 (proton acceptor) is an active-site residue. Residues His-146, Tyr-178, and Glu-185 each coordinate Zn(2+).

Belongs to the peptidase M34 family. Pro-Pro endopeptidase subfamily. Monomer. It depends on Zn(2+) as a cofactor.

It localises to the secreted. The catalysed reaction is The enzyme catalyzes the hydrolytic cleavage of peptide bonds between two proline residues.. Is inhibited by the chelating agent o-phenanthroline in vitro. Zinc-dependent endoprotease with a unique preference for proline residues surrounding the scissile bond. Exhibits a high preference for an asparagine at the P2 position and hydrophobic residues (Val, Ile, Leu) at the P3 position. Efficiently cleaves the LPXTG cell surface proteins CD630_28310 and CD630_32460 at multiple cleavage sites in vivo. Has a role in the regulation of C.difficile adhesion versus motility by cleaving surface adhesion proteins such as the collagen binding protein CD630_28310, and is important for efficient infection. Is also able to cleave fibronectin and fibrinogen in vitro; cleaves at the N-terminus of the beta-chain of fibrinogen. Destabilizes the fibronectin network produced by human fibroblasts. Therefore, may be important in key steps of clostridial pathogenesis by degrading extracellular matrix components associated with the gut epithelial cells. To a lesser extent, IgA1, IgA2, and human HSP 90-beta, but not HSP 90-alpha, are also substrates for the enzyme. Is not active on different collagen types, casein and gelatin. This Clostridioides difficile (strain 630) (Peptoclostridium difficile) protein is Pro-Pro endopeptidase.